Consider the following 125-residue polypeptide: Nascent polypeptide-associated complex protein (125 aa).

Residues 9–76 enclose the NAC-A/B domain; the sequence is PRMMKQMQKM…SKNTSKTAEK (68 aa).

This sequence belongs to the NAC-alpha family. Homodimer. Interacts with the ribosome. Binds ribosomal RNA.

Functionally, contacts the emerging nascent chain on the ribosome. This Methanococcus vannielii (strain ATCC 35089 / DSM 1224 / JCM 13029 / OCM 148 / SB) protein is Nascent polypeptide-associated complex protein.